A 156-amino-acid polypeptide reads, in one-letter code: Small ribosomal subunit protein uS7 (156 aa).

It belongs to the universal ribosomal protein uS7 family. In terms of assembly, part of the 30S ribosomal subunit. Contacts proteins S9 and S11.

Functionally, one of the primary rRNA binding proteins, it binds directly to 16S rRNA where it nucleates assembly of the head domain of the 30S subunit. Is located at the subunit interface close to the decoding center, probably blocks exit of the E-site tRNA. This Nitratiruptor sp. (strain SB155-2) protein is Small ribosomal subunit protein uS7.